The sequence spans 570 residues: Sulfite reductase [NADPH] hemoprotein beta-component (570 aa).

[4Fe-4S] cluster is bound by residues C434, C440, C479, and C483. C483 provides a ligand contact to siroheme.

Belongs to the nitrite and sulfite reductase 4Fe-4S domain family. As to quaternary structure, alpha(8)-beta(8). The alpha component is a flavoprotein, the beta component is a hemoprotein. The cofactor is siroheme. [4Fe-4S] cluster is required as a cofactor.

It catalyses the reaction hydrogen sulfide + 3 NADP(+) + 3 H2O = sulfite + 3 NADPH + 4 H(+). It participates in sulfur metabolism; hydrogen sulfide biosynthesis; hydrogen sulfide from sulfite (NADPH route): step 1/1. Its function is as follows. Component of the sulfite reductase complex that catalyzes the 6-electron reduction of sulfite to sulfide. This is one of several activities required for the biosynthesis of L-cysteine from sulfate. This chain is Sulfite reductase [NADPH] hemoprotein beta-component, found in Zymomonas mobilis subsp. mobilis (strain ATCC 31821 / ZM4 / CP4).